Consider the following 37-residue polypeptide: Neuropeptide Y1-like conopeptide (37 aa).

Residue F37 is modified to Phenylalanine amide.

The protein belongs to the NPY family. Expressed by the venom duct.

It localises to the secreted. In terms of biological role, causes hyperactivity such as jumping, rapid circling and tail flicking, when intraventricularly injected into mice brain. The protein is Neuropeptide Y1-like conopeptide of Conus betulinus (Beech cone).